The following is a 24-amino-acid chain: N-acyl-L-amino acid amidohydrolase (24 aa).

Belongs to the peptidase M20 family. Homotetramer. Co(2+) serves as cofactor.

It catalyses the reaction an N-acyl-L-amino acid + H2O = an L-alpha-amino acid + a carboxylate. The enzyme catalyses an N-acetyl-L-cysteine-S-conjugate + H2O = an S-substituted L-cysteine + acetate. The sequence is that of N-acyl-L-amino acid amidohydrolase from Parageobacillus thermoglucosidasius (Geobacillus thermoglucosidasius).